We begin with the raw amino-acid sequence, 363 residues long: Histidine biosynthesis bifunctional protein HisB (363 aa).

Residues 1 to 174 (MTQPTLFIDR…AVTNIGDRQP (174 aa)) form a histidinol-phosphatase region. Catalysis depends on D9, which acts as the Nucleophile. Mg(2+)-binding residues include D9 and D11. D11 functions as the Proton donor in the catalytic mechanism. Zn(2+)-binding residues include C92, H94, C100, and C102. D129 contributes to the Mg(2+) binding site. The imidazoleglycerol-phosphate dehydratase stretch occupies residues 175–363 (RYAEVVRKTK…NELPSSKGVL (189 aa)).

The protein in the N-terminal section; belongs to the histidinol-phosphatase family. It in the C-terminal section; belongs to the imidazoleglycerol-phosphate dehydratase family. It depends on Mg(2+) as a cofactor. Zn(2+) is required as a cofactor.

The protein resides in the cytoplasm. It carries out the reaction D-erythro-1-(imidazol-4-yl)glycerol 3-phosphate = 3-(imidazol-4-yl)-2-oxopropyl phosphate + H2O. The enzyme catalyses L-histidinol phosphate + H2O = L-histidinol + phosphate. Its pathway is amino-acid biosynthesis; L-histidine biosynthesis; L-histidine from 5-phospho-alpha-D-ribose 1-diphosphate: step 6/9. It functions in the pathway amino-acid biosynthesis; L-histidine biosynthesis; L-histidine from 5-phospho-alpha-D-ribose 1-diphosphate: step 8/9. The sequence is that of Histidine biosynthesis bifunctional protein HisB from Actinobacillus pleuropneumoniae serotype 5b (strain L20).